A 347-amino-acid polypeptide reads, in one-letter code: NADH-ubiquinone oxidoreductase chain 2 (347 aa).

A run of 11 helical transmembrane segments spans residues 1-21 (MNPL…AIVM), 25-45 (HWLT…PMLM), 59-79 (YFLT…MNLT), 96-116 (IIMT…FWVP), 127-147 (CLIL…MISP), 149-169 (INLN…GWGG), 178-198 (IMAY…AYNP), 200-220 (MTML…MLLI), 247-267 (IMLS…WMII), 276-296 (IIMP…YMRL), and 325-345 (LLSP…MMSL).

The protein belongs to the complex I subunit 2 family. In terms of assembly, core subunit of respiratory chain NADH dehydrogenase (Complex I) which is composed of 45 different subunits. Interacts with TMEM242.

Its subcellular location is the mitochondrion inner membrane. It catalyses the reaction a ubiquinone + NADH + 5 H(+)(in) = a ubiquinol + NAD(+) + 4 H(+)(out). In terms of biological role, core subunit of the mitochondrial membrane respiratory chain NADH dehydrogenase (Complex I) which catalyzes electron transfer from NADH through the respiratory chain, using ubiquinone as an electron acceptor. Essential for the catalytic activity and assembly of complex I. The chain is NADH-ubiquinone oxidoreductase chain 2 from Natalus stramineus (Mexican funnel-eared bat).